A 155-amino-acid chain; its full sequence is Fibroblast growth factor 1 (155 aa).

Positions 1–15 are excised as a propeptide; the sequence is MAEGEITTFTALTER. N33 serves as a coordination point for heparin. Positions 127 to 143 are heparin-binding; it reads KKNGNSKLGPRTHYGQK.

This sequence belongs to the heparin-binding growth factors family.

It is found in the secreted. Its subcellular location is the cytoplasm. The protein resides in the cell cortex. It localises to the cytosol. The protein localises to the nucleus. Plays an important role in the regulation of cell survival, cell division, angiogenesis, cell differentiation and cell migration. Functions as a potent mitogen in vitro. Acts as a ligand for FGFR1 and integrins. Binds to FGFR1 in the presence of heparin leading to FGFR1 dimerization and activation via sequential autophosphorylation on tyrosine residues which act as docking sites for interacting proteins, leading to the activation of several signaling cascades. Binds to integrins. Its binding to integrins and subsequent ternary complex formation with integrins and FGFR1 are essential for FGF1 signaling. In Gallus gallus (Chicken), this protein is Fibroblast growth factor 1 (FGF1).